The sequence spans 248 residues: 5'-nucleotidase SurE (248 aa).

Positions 8, 9, 39, and 92 each coordinate a divalent metal cation.

The protein belongs to the SurE nucleotidase family. A divalent metal cation is required as a cofactor.

It localises to the cytoplasm. It carries out the reaction a ribonucleoside 5'-phosphate + H2O = a ribonucleoside + phosphate. Its function is as follows. Nucleotidase that shows phosphatase activity on nucleoside 5'-monophosphates. The sequence is that of 5'-nucleotidase SurE from Tolumonas auensis (strain DSM 9187 / NBRC 110442 / TA 4).